Reading from the N-terminus, the 186-residue chain is MPKAPAKKAEPAPAPAPAPEPAPAPAAPAVDLSAVKVEFSADQIEDYREAFGLFDRVGDNKVAYNQIADIMRALGQNPTNKEVSKLLGNPSADDMTNKRVEFEAFLPMLQTIINSPNKAGFEDYVEGLRVFDKEGNGTVMGAELRIVLSTLGEKMTEAEIDALMAGQEDENGVVNYEAFVKHIMSV.

Methionine 1 bears the Blocked amino end (Met) mark. The interval 1–26 is disordered; that stretch reads MPKAPAKKAEPAPAPAPAPEPAPAPA. Over residues 12–26 the composition is skewed to pro residues; it reads APAPAPAPEPAPAPA. 2 consecutive EF-hand domains span residues 42–77 and 119–154; these read DQIE…LGQN and AGFE…LGEK.

In terms of assembly, myosin is a hexamer of 2 heavy chains and 4 light chains.

In Chelon ramada (Thin-lipped grey mullet), this protein is Myosin light chain 1, skeletal muscle isoform.